We begin with the raw amino-acid sequence, 595 residues long: Pyranose dehydrogenase (595 aa).

A signal peptide spans 1-21 (MARFNARLFSIAILGFQVARS). N-linked (GlcNAc...) asparagine glycosylation is found at N95 and N110. A Tele-8alpha-FAD histidine modification is found at H123. Residues N195, N337, N367, N502, and N510 are each glycosylated (N-linked (GlcNAc...) asparagine). Residue H530 is the Proton acceptor of the active site. N541 carries N-linked (GlcNAc...) asparagine glycosylation. The active site involves H574.

This sequence belongs to the GMC oxidoreductase family. As to quaternary structure, monomer. It depends on FAD as a cofactor. In terms of processing, N-glycosylated.

It is found in the secreted. It catalyses the reaction pyranose + acceptor = pyranos-2-ulose + reduced acceptor.. It carries out the reaction pyranose + acceptor = pyranos-3-ulose + reduced acceptor.. The enzyme catalyses pyranose + acceptor = pyranos-2,3-diulose + reduced acceptor.. The catalysed reaction is a pyranoside + acceptor = a pyranosid-3-ulose + reduced acceptor.. It catalyses the reaction a pyranoside + acceptor = a pyranosid-3,4-diulose + reduced acceptor.. Functionally, catalyzes the single-oxidation or sequential double oxidation reaction of carbohydrates primarily at carbon-2 and/or carbon-3 with the concomitant reduction of the flavin. The enzyme exhibits a broad sugar substrate specificity, oxidizing different aldopyranoses to the corresponding C-1, C-2, C-3 or C-1,2, C-2,3 and C-3,4 (di)dehydro sugars with substrate-specific regioselectivity. Accepts only a narrow range of electron acceptors such as substituted benzoquinones and complexed metal ions and reacts extremely slowly with O(2) as acceptor. May play a role in the natural recycling of plant matter by oxidizing all major monosaccharides in lignocellulose and by reducing quinone compounds or reactive radical species generated during lignin depolymerization. The sequence is that of Pyranose dehydrogenase from Agaricus campestris (Field mushroom).